The sequence spans 309 residues: Sulfate adenylyltransferase subunit 2 (309 aa).

The protein belongs to the PAPS reductase family. CysD subfamily. Heterodimer composed of CysD, the smaller subunit, and CysN.

It carries out the reaction sulfate + ATP + H(+) = adenosine 5'-phosphosulfate + diphosphate. It participates in sulfur metabolism; hydrogen sulfide biosynthesis; sulfite from sulfate: step 1/3. In terms of biological role, with CysN forms the ATP sulfurylase (ATPS) that catalyzes the adenylation of sulfate producing adenosine 5'-phosphosulfate (APS) and diphosphate, the first enzymatic step in sulfur assimilation pathway. APS synthesis involves the formation of a high-energy phosphoric-sulfuric acid anhydride bond driven by GTP hydrolysis by CysN coupled to ATP hydrolysis by CysD. The sequence is that of Sulfate adenylyltransferase subunit 2 from Mycolicibacterium vanbaalenii (strain DSM 7251 / JCM 13017 / BCRC 16820 / KCTC 9966 / NRRL B-24157 / PYR-1) (Mycobacterium vanbaalenii).